The sequence spans 442 residues: uncharacterized protein (442 aa).

The next 7 membrane-spanning stretches (helical) occupy residues 209–229 (FNIWTHLSAFIVFFAVLAYFY), 247–267 (IFFLLSAMKCLGCSVIWHTFS), 284–304 (VGISALIAASIISVEYHAFVC), 308–328 (LRFIFIAFTGTLGLIGIYTPW), 342–362 (IFFFVGLACSGLIPMITMFYI), 374–394 (PVFKSIFSYIIGVLFYGLHIP), and 402–422 (FDIIGNSHQIWHIAIIVGVAF).

The protein resides in the membrane. This is an uncharacterized protein from Schizosaccharomyces pombe (strain 972 / ATCC 24843) (Fission yeast).